We begin with the raw amino-acid sequence, 614 residues long: Glucosidase 2 subunit beta (614 aa).

Positions 1–19 (MGLHAILLLLLLRISASAA) are cleaved as a signal peptide. Residue N115 is glycosylated (N-linked (GlcNAc...) asparagine). Basic and acidic residues-rich tracts occupy residues 194–222 (EEER…KKAS), 231–272 (QENH…HDPE), and 324–351 (TGEK…HSEE). The interval 194–396 (EEERLRKEKE…SHESDDEYVD (203 aa)) is disordered. The span at 352 to 364 (THEDESDVPESAE) shows a compositional bias: acidic residues. Positions 372–382 (SEVEDDRHKYD) are enriched in basic and acidic residues. The segment covering 383-396 (DEDFSHESDDEYVD) has biased composition (acidic residues). The MRH domain occupies 497–592 (DQCFESKEGK…VLSTPALCDE (96 aa)). Intrachain disulfides connect C499–C512, C549–C578, and C563–C590.

As to quaternary structure, heterodimer of a catalytic alpha subunit and a beta subunit.

It is found in the endoplasmic reticulum. It functions in the pathway glycan metabolism; N-glycan metabolism. Its function is as follows. Regulatory subunit of glucosidase II. May be required for defense response elicited by pathogen-associated molecular patterns (PAMPs). This Oryza sativa subsp. japonica (Rice) protein is Glucosidase 2 subunit beta.